The sequence spans 189 residues: Putative manganese efflux pump MntP (189 aa).

Helical transmembrane passes span 3-23 (LSAT…ASIG), 41-61 (LIFG…GLFA), 65-85 (ILEW…CRMI), 104-124 (FWVL…IGVG), 132-152 (IVHT…LGML), and 165-185 (AEII…YEHI).

The protein belongs to the MntP (TC 9.B.29) family.

The protein localises to the cell inner membrane. Probably functions as a manganese efflux pump. This chain is Putative manganese efflux pump MntP, found in Yersinia enterocolitica serotype O:8 / biotype 1B (strain NCTC 13174 / 8081).